Here is a 219-residue protein sequence, read N- to C-terminus: Protein VERNALIZATION 2 (219 aa).

The CCT domain occupies Arg138–Val180.

As to expression, mainly expressed in leaves, and at low levels in the shoot apical meristem (SAM).

The protein resides in the nucleus. Involved in the regulation of vernalization; this process in essential for flowering in cv. Bd29-1 but seems do not occur in cv. Bd21. This is Protein VERNALIZATION 2 from Brachypodium distachyon (Purple false brome).